The following is a 100-amino-acid chain: Urease subunit gamma (100 aa).

This sequence belongs to the urease gamma subunit family. As to quaternary structure, heterotrimer of UreA (gamma), UreB (beta) and UreC (alpha) subunits. Three heterotrimers associate to form the active enzyme.

The protein localises to the cytoplasm. It catalyses the reaction urea + 2 H2O + H(+) = hydrogencarbonate + 2 NH4(+). Its pathway is nitrogen metabolism; urea degradation; CO(2) and NH(3) from urea (urease route): step 1/1. In Nocardia farcinica (strain IFM 10152), this protein is Urease subunit gamma.